The sequence spans 653 residues: 2-oxoglutarate oxidoreductase subunit KorA (653 aa).

The disordered stretch occupies residues 1–21 (MDPNGSGAGPESHDAAFHAAP). Residues 11–21 (ESHDAAFHAAP) show a composition bias toward basic and acidic residues.

KG oxidoreductase (KOR) is composed of KorA and KorB subunits.

It catalyses the reaction 2 oxidized [2Fe-2S]-[ferredoxin] + 2-oxoglutarate + CoA = succinyl-CoA + 2 reduced [2Fe-2S]-[ferredoxin] + CO2 + H(+). Its pathway is carbohydrate metabolism; tricarboxylic acid cycle. In terms of biological role, component of KG oxidoreductase (KOR) that catalyzes the CoA-dependent oxidative decarboxylation of 2-oxoglutarate (alpha-ketoglutarate, KG) to succinyl-CoA. Methyl viologen can act as electron acceptor in vitro; the physiologic electron acceptor is unknown. Is involved in the alternative TCA pathway that functions concurrently with fatty acid beta-oxidation. Since a growing body of evidence indicates that lipids (for example cholesterol and fatty acids) are a predominant growth substrate for M.tuberculosis during infection, flux through KOR likely represents an important step in intermediary metabolism in vivo. KOR-dependent decarboxylation of KG also appears to be an important source of CO(2) in M.tuberculosis metabolism. The protein is 2-oxoglutarate oxidoreductase subunit KorA (korA) of Mycobacterium tuberculosis (strain ATCC 25618 / H37Rv).